We begin with the raw amino-acid sequence, 90 residues long: RNA-binding protein Hfq (90 aa).

One can recognise a Sm domain in the interval 9–68 (DPFLNALRRERVPVSIYLVNGIKLQGQVESFDQFVILLKNTVSQMVYKHAISTVVPARPF).

The protein belongs to the Hfq family. As to quaternary structure, homohexamer.

Its function is as follows. RNA chaperone that binds small regulatory RNA (sRNAs) and mRNAs to facilitate mRNA translational regulation in response to envelope stress, environmental stress and changes in metabolite concentrations. Also binds with high specificity to tRNAs. This Shewanella baltica (strain OS155 / ATCC BAA-1091) protein is RNA-binding protein Hfq.